A 267-amino-acid polypeptide reads, in one-letter code: Thiamine thiazole synthase (267 aa).

Residues Ser47, 66-67, Gly74, Val138, and 164-166 contribute to the NAD(+) site; these read ER and HID. Residues Asp166 and His181 each coordinate Fe cation. The NAD(+) site is built by Ser184 and Met230. Residue Arg240 participates in glycine binding.

The protein belongs to the THI4 family. As to quaternary structure, homooctamer; tetramer of dimers. It depends on Fe(2+) as a cofactor.

It catalyses the reaction hydrogen sulfide + glycine + NAD(+) = ADP-5-ethyl-4-methylthiazole-2-carboxylate + nicotinamide + 3 H2O + H(+). Its pathway is cofactor biosynthesis; thiamine diphosphate biosynthesis. Functionally, involved in the biosynthesis of the thiazole moiety of thiamine. Catalyzes the conversion of NAD and glycine to adenosine diphosphate 5-(2-hydroxyethyl)-4-methylthiazole-2-carboxylate (ADT), an adenylated thiazole intermediate, using free sulfide as a source of sulfur. The protein is Thiamine thiazole synthase of Methanocaldococcus jannaschii (strain ATCC 43067 / DSM 2661 / JAL-1 / JCM 10045 / NBRC 100440) (Methanococcus jannaschii).